The following is a 972-amino-acid chain: Protein NRDE2 homolog (972 aa).

A compositionally biased stretch (polar residues) spans 1–17; that stretch reads MPSNHNTSVPKFSSFNS. A disordered region spans residues 1 to 61; it reads MPSNHNTSVP…RSIQSNFAVD (61 aa). The span at 19 to 33 shows a compositional bias: basic residues; it reads KAKKNPITKSNKKYR. A compositionally biased stretch (polar residues) spans 37–59; that stretch reads DQVSSNHAKSSFPSHRSIQSNFA. HAT repeat units lie at residues 159–191, 250–282, 318–350, 355–386, 608–640, 788–820, and 860–894; these read LNIL…YQER, WSKE…YFTG, TDVT…YELA, QANM…FWNS, EEKP…LEHL, YNLP…FESK, and TNSQ…ILNL. Position 970 is a phosphoserine (S970).

This sequence belongs to the NRDE2 family.

It is found in the nucleus. This Schizosaccharomyces pombe (strain 972 / ATCC 24843) (Fission yeast) protein is Protein NRDE2 homolog.